A 137-amino-acid polypeptide reads, in one-letter code: MSSEKEVQEKIATLQILQEEAEALQRRLMELEILENEYRKTLETLEFFESIDTSVEALMNLGGGVFAYVDVKNSKKMLVDIGSGVVVEREVGEAIEFVKNRIKKIEENQEKMTSMLQQVLSQAQRIQQELAARQQKE.

The protein belongs to the prefoldin subunit alpha family. Heterohexamer of two alpha and four beta subunits.

It localises to the cytoplasm. Molecular chaperone capable of stabilizing a range of proteins. Seems to fulfill an ATP-independent, HSP70-like function in archaeal de novo protein folding. The protein is Prefoldin subunit alpha (pfdA) of Archaeoglobus fulgidus (strain ATCC 49558 / DSM 4304 / JCM 9628 / NBRC 100126 / VC-16).